The chain runs to 79 residues: Acyl carrier protein (79 aa).

The 76-residue stretch at 2 to 77 (SDVAERVKKI…DAVNFLEKAT (76 aa)) folds into the Carrier domain. The residue at position 37 (serine 37) is an O-(pantetheine 4'-phosphoryl)serine.

The protein belongs to the acyl carrier protein (ACP) family. Post-translationally, 4'-phosphopantetheine is transferred from CoA to a specific serine of apo-ACP by AcpS. This modification is essential for activity because fatty acids are bound in thioester linkage to the sulfhydryl of the prosthetic group.

It localises to the cytoplasm. It participates in lipid metabolism; fatty acid biosynthesis. In terms of biological role, carrier of the growing fatty acid chain in fatty acid biosynthesis. This is Acyl carrier protein from Methylocella silvestris (strain DSM 15510 / CIP 108128 / LMG 27833 / NCIMB 13906 / BL2).